The following is a 120-amino-acid chain: Guanidine hydrolase-activating protein A (120 aa).

The Ni(2+) site is built by histidine 2, glutamate 3, and glutamate 41. 4 residues coordinate Zn(2+): cysteine 74, cysteine 77, cysteine 91, and cysteine 94.

It belongs to the HypA/HybF family.

Its function is as follows. Involved in the maturation of the nickel-dependent guanidine hydrolase GdmH. Required for nickel insertion into the metal center of GdmH. Seems to be required only for GdmH activation and not for activity. The sequence is that of Guanidine hydrolase-activating protein A from Synechocystis sp. (strain ATCC 27184 / PCC 6803 / Kazusa).